Here is a 383-residue protein sequence, read N- to C-terminus: MFQTFRKWFWSERYWLPPTIKWSDLEDHDGLVFVKASHLYITIPYAFLLMVVRYFFEKFVATPLANALGIKKTQHKIKPNAILENFFKHSTSKPSHTDIYGLAKKCNLTERQVERWLRIRQKQNKPCRLQKFQESCWRFTFYLLITMAGAVFLYDKPWAYDLWEVWNDYPRQPLLPSQYWYYILEMSFYWSLVFSLSTDIKRKDFLAHVIHHLAAISLMSFSWCANYIRSGTLVMFIHDISDIWLESAKMFSYAGWKQTCNTLFFIFTVVFFISRFIIFPFWILYCTLILPLHYLEPFFSYIFLNLQLMILQGLHVYWGYFILKMLNRCIFTQNVQDVRSDNEEEEEEEEEEEAESTKGKETEYLKNGLGTNRHLIANGQHGR.

Residues 32–52 (VFVKASHLYITIPYAFLLMVV) traverse the membrane as a helical segment. Residues 66–127 (NALGIKKTQH…RIRQKQNKPC (62 aa)) form a homeobox-like region. Residues 130 to 331 (QKFQESCWRF…ILKMLNRCIF (202 aa)) enclose the TLC domain. A run of 5 helical transmembrane segments spans residues 139 to 159 (FTFYLLITMAGAVFLYDKPWA), 174 to 194 (LLPSQYWYYILEMSFYWSLVF), 205 to 225 (FLAHVIHHLAAISLMSFSWCA), 263 to 283 (LFFIFTVVFFISRFIIFPFWI), and 302 to 322 (IFLNLQLMILQGLHVYWGYFI). The Cytoplasmic segment spans residues 323–383 (LKMLNRCIFT…HLIANGQHGR (61 aa)). Phosphoserine is present on S340. The disordered stretch occupies residues 340–383 (SDNEEEEEEEEEEEAESTKGKETEYLKNGLGTNRHLIANGQHGR). The segment covering 342–354 (NEEEEEEEEEEEA) has biased composition (acidic residues). Positions 355–364 (ESTKGKETEY) are enriched in basic and acidic residues.

Predominantly expressed in testis. In skin, present in the upper stratum spinosum and stratum granulosum (at protein level).

It is found in the endoplasmic reticulum membrane. The enzyme catalyses a very long-chain fatty acyl-CoA + a sphingoid base = an N-(very-long-chain fatty acyl)-sphingoid base + CoA + H(+). It catalyses the reaction docosanoyl-CoA + sphinganine = N-docosanoylsphinganine + CoA + H(+). It carries out the reaction tetracosanoyl-CoA + sphinganine = N-tetracosanoylsphinganine + CoA + H(+). The catalysed reaction is hexacosanoyl-CoA + sphinganine = N-hexacosanoylsphinganine + CoA + H(+). The enzyme catalyses 2-hydroxydocosanoyl-CoA + sphinganine = N-(2-hydroxydocosanoyl)-sphinganine + CoA + H(+). It catalyses the reaction 2-hydroxytetracosanoyl-CoA + sphinganine = N-(2-hydroxytetracosanoyl)-sphinganine + CoA + H(+). It carries out the reaction an ultra-long-chain fatty acyl-CoA + a sphingoid base = an N-(ultra-long-chain-acyl)-sphingoid base + CoA + H(+). The catalysed reaction is octacosanoyl-CoA + sphinganine = N-(octacosanoyl)-sphinganine + CoA + H(+). The enzyme catalyses a fatty acyl-CoA + sphing-4-enine = an N-acylsphing-4-enine + CoA + H(+). It catalyses the reaction sphinganine + octadecanoyl-CoA = N-(octadecanoyl)-sphinganine + CoA + H(+). It carries out the reaction 2-hydroxyoctadecanoyl-CoA + sphinganine = N-(2-hydroxyoctadecanoyl)-sphinganine + CoA + H(+). The protein operates within lipid metabolism; sphingolipid metabolism. Ceramide synthase that catalyzes the transfer of the acyl chain from acyl-CoA to a sphingoid base, with high selectivity toward very- and ultra-long-chain fatty acyl-CoA (chain length greater than C22). N-acylates sphinganine and sphingosine bases to form dihydroceramides and ceramides in de novo synthesis and salvage pathways, respectively. It is crucial for the synthesis of ultra-long-chain ceramides in the epidermis, to maintain epidermal lipid homeostasis and terminal differentiation. The polypeptide is Ceramide synthase 3 (Mus musculus (Mouse)).